Consider the following 421-residue polypeptide: Solute carrier family 35 member F3 (421 aa).

Positions 25–53 (EGEERPREPPGPAEAQAPAGTEAGGRTSR) are disordered. Over residues 37–49 (AEAQAPAGTEAGG) the composition is skewed to low complexity. The next 10 membrane-spanning stretches (helical) occupy residues 66–86 (VFWGVAVVFCVCASWAGSTQL), 98–118 (FTLTWFATNWNFLFFPLYYAG), 149–169 (VFFTKAAPFGVLWTLTNYLYL), 179–199 (DVSVLFCCNKSFVFLLSWIVL), 208–228 (IVAAILAIAGIVMMTYADGFH), 232–252 (VIGIALVVGSASMSALYKVLF), 266–286 (LFLSILGVFNILFITCIPVIL), 305–325 (LCGFSILLLTFNIVLNFGIAV), 326–346 (TYPTLMSLGIVLSVPVNAVVD), and 352–372 (IVFNGVRVIAIIIIGLGFLLL). A disordered region spans residues 394–421 (KEETAESSGDLGTGPQSRSRRARPSFAR). The segment covering 411-421 (RSRRARPSFAR) has biased composition (basic residues).

This sequence belongs to the SLC35F solute transporter family.

The protein resides in the membrane. It carries out the reaction thiamine(in) = thiamine(out). In terms of biological role, mediates thiamine transport. The protein is Solute carrier family 35 member F3 (Slc35f3) of Mus musculus (Mouse).